The sequence spans 381 residues: Acetylornithine deacetylase (381 aa).

His-79 provides a ligand contact to Zn(2+). Asp-81 is an active-site residue. Residue Asp-111 coordinates Zn(2+). Residue Glu-143 is part of the active site. The Zn(2+) site is built by Glu-144, Glu-168, and His-354.

Belongs to the peptidase M20A family. ArgE subfamily. Homodimer. The cofactor is Zn(2+). Requires Co(2+) as cofactor. Glutathione is required as a cofactor.

Its subcellular location is the cytoplasm. The catalysed reaction is N(2)-acetyl-L-ornithine + H2O = L-ornithine + acetate. Its pathway is amino-acid biosynthesis; L-arginine biosynthesis; L-ornithine from N(2)-acetyl-L-ornithine (linear): step 1/1. Functionally, catalyzes the hydrolysis of the amide bond of N(2)-acetylated L-amino acids. Cleaves the acetyl group from N-acetyl-L-ornithine to form L-ornithine, an intermediate in L-arginine biosynthesis pathway, and a branchpoint in the synthesis of polyamines. The chain is Acetylornithine deacetylase from Buchnera aphidicola subsp. Acyrthosiphon pisum (strain APS) (Acyrthosiphon pisum symbiotic bacterium).